Consider the following 274-residue polypeptide: uncharacterized protein (274 aa).

104-111 (GVFAIGKS) contributes to the ATP binding site.

This is an uncharacterized protein from Mycoplasma genitalium (strain ATCC 33530 / DSM 19775 / NCTC 10195 / G37) (Mycoplasmoides genitalium).